The chain runs to 190 residues: Cytoplasmic envelopment protein 3 (190 aa).

Residue G2 is the site of N-myristoyl glycine; by host attachment. The segment at 14 to 190 (GTTSGEPLKD…TKKPAASLPF (177 aa)) is disordered. A compositionally biased stretch (polar residues) spans 30 to 43 (SLRSYDNIPPTSSS). Residues 44–58 (DEGEDDDDGEDDDNE) show a composition bias toward acidic residues. The span at 80-90 (SHREATHDGPK) shows a compositional bias: basic and acidic residues. The segment covering 108-123 (KQSKKKKKPSKHHHHQ) has biased composition (basic residues). Positions 130-139 (ETDDLDEEDT) are enriched in acidic residues.

The protein belongs to the herpesviridae cytoplasmic envelopment protein 3 family. In terms of assembly, interacts with cytoplasmic envelopment protein 2; this interaction is essential for the proper localization of each protein to the assembly complex and thus for the production of infectious virus. In terms of processing, myristoylation and palmitoylation (probably on one or more of the nearby cysteines at the N-terminus) enable membrane-binding and Golgi apparatus-specific targeting and are essential for efficient packaging. Post-translationally, phosphorylated. Phosphorylation does not seem to be required for recycling to the host Golgi apparatus. Packaging is selective for underphosphorylated forms.

Its subcellular location is the virion tegument. The protein resides in the virion membrane. It is found in the host cell membrane. The protein localises to the host Golgi apparatus membrane. Functionally, plays an important role in the cytoplasmic envelopment of tegument proteins and capsids during the assembly and egress processes. Also participates in viral entry at the fusion step probably by regulating the core fusion machinery. The sequence is that of Cytoplasmic envelopment protein 3 (UL99) from Human cytomegalovirus (strain Merlin) (HHV-5).